The following is a 128-amino-acid chain: Fluoride-specific ion channel FluC (128 aa).

Transmembrane regions (helical) follow at residues 6–26 (LVAL…GLVL), 36–56 (LPTF…AGLA), 68–88 (VLLF…GLET), and 99–119 (IAAA…WLGF). Residues glycine 76 and threonine 79 each coordinate Na(+).

This sequence belongs to the fluoride channel Fluc/FEX (TC 1.A.43) family.

The protein resides in the cell inner membrane. It catalyses the reaction fluoride(in) = fluoride(out). With respect to regulation, na(+) is not transported, but it plays an essential structural role and its presence is essential for fluoride channel function. Functionally, fluoride-specific ion channel. Important for reducing fluoride concentration in the cell, thus reducing its toxicity. In Methylobacillus flagellatus (strain ATCC 51484 / DSM 6875 / VKM B-1610 / KT), this protein is Fluoride-specific ion channel FluC.